Reading from the N-terminus, the 275-residue chain is MEIRLAKSYGFCFGVKRAIKIAEESPNSVTFGPLIHNKNEIDRLKEKYNVELVEEIDEIQENSRVVIRTHGIPKEKLALLKEKNVEVIDATCPFVTKPQEIVSKMSEEGYSIVIFGDINHPEIKGVMSYATDPIVVLSVEELEGKPLKEKVATVAQTTRKFEEYQKIVNYLMEHKKEVRVFNTICNATFENQDAARELSREADIMIIIGGKNSSNTKQLFKICKENCPDSYLVENAKELEKEWFEGKKVCGITAGASTPNWIIEEVIENIKKIQV.

Residue cysteine 12 coordinates [4Fe-4S] cluster. Residues histidine 36 and histidine 70 each contribute to the (2E)-4-hydroxy-3-methylbut-2-enyl diphosphate site. Positions 36 and 70 each coordinate dimethylallyl diphosphate. Histidine 36 and histidine 70 together coordinate isopentenyl diphosphate. [4Fe-4S] cluster is bound at residue cysteine 92. Histidine 120 serves as a coordination point for (2E)-4-hydroxy-3-methylbut-2-enyl diphosphate. Residue histidine 120 coordinates dimethylallyl diphosphate. Residue histidine 120 participates in isopentenyl diphosphate binding. The Proton donor role is filled by glutamate 122. Residue threonine 157 coordinates (2E)-4-hydroxy-3-methylbut-2-enyl diphosphate. A [4Fe-4S] cluster-binding site is contributed by cysteine 185. Residues serine 213, serine 214, asparagine 215, and serine 257 each coordinate (2E)-4-hydroxy-3-methylbut-2-enyl diphosphate. Dimethylallyl diphosphate-binding residues include serine 213, serine 214, asparagine 215, and serine 257. 4 residues coordinate isopentenyl diphosphate: serine 213, serine 214, asparagine 215, and serine 257.

It belongs to the IspH family. It depends on [4Fe-4S] cluster as a cofactor.

It catalyses the reaction isopentenyl diphosphate + 2 oxidized [2Fe-2S]-[ferredoxin] + H2O = (2E)-4-hydroxy-3-methylbut-2-enyl diphosphate + 2 reduced [2Fe-2S]-[ferredoxin] + 2 H(+). The catalysed reaction is dimethylallyl diphosphate + 2 oxidized [2Fe-2S]-[ferredoxin] + H2O = (2E)-4-hydroxy-3-methylbut-2-enyl diphosphate + 2 reduced [2Fe-2S]-[ferredoxin] + 2 H(+). It functions in the pathway isoprenoid biosynthesis; dimethylallyl diphosphate biosynthesis; dimethylallyl diphosphate from (2E)-4-hydroxy-3-methylbutenyl diphosphate: step 1/1. It participates in isoprenoid biosynthesis; isopentenyl diphosphate biosynthesis via DXP pathway; isopentenyl diphosphate from 1-deoxy-D-xylulose 5-phosphate: step 6/6. Its function is as follows. Catalyzes the conversion of 1-hydroxy-2-methyl-2-(E)-butenyl 4-diphosphate (HMBPP) into a mixture of isopentenyl diphosphate (IPP) and dimethylallyl diphosphate (DMAPP). Acts in the terminal step of the DOXP/MEP pathway for isoprenoid precursor biosynthesis. The protein is 4-hydroxy-3-methylbut-2-enyl diphosphate reductase of Nitratiruptor sp. (strain SB155-2).